Consider the following 414-residue polypeptide: Calcium/calmodulin-dependent protein kinase cmkA (414 aa).

The Protein kinase domain occupies 23–278 (YRFGRTLGAG…SEEALKHPWL (256 aa)). Residues 29–37 (LGAGTYGIV) and Lys50 contribute to the ATP site. Asp142 functions as the Proton acceptor in the catalytic mechanism. Positions 278-314 (LKGESASDRDLLPEIRAYIARSRLKRGIEIIKLANRI) are autoinhibitory domain. The calmodulin-binding stretch occupies residues 293–315 (RAYIARSRLKRGIEIIKLANRIE). Disordered stretches follow at residues 320 to 375 (QEED…KRSL) and 394 to 414 (EMKE…RAHS). Residues 351-364 (STENSNTHPASTGN) show a composition bias toward polar residues.

The protein belongs to the protein kinase superfamily. CAMK Ser/Thr protein kinase family. CaMK subfamily. As to quaternary structure, monomer. Autophosphorylated in a calcium/calmodulin-dependent manner.

It catalyses the reaction L-seryl-[protein] + ATP = O-phospho-L-seryl-[protein] + ADP + H(+). The enzyme catalyses L-threonyl-[protein] + ATP = O-phospho-L-threonyl-[protein] + ADP + H(+). With respect to regulation, activated by Ca(2+)/calmodulin. Binding of calmodulin may relieve intrasteric autoinhibition. Functionally, calcium/calmodulin-dependent protein kinase. Required in nuclear division cycle for progression from G2 to mitosis. Required for hyphal growth. The chain is Calcium/calmodulin-dependent protein kinase cmkA (cmkA) from Emericella nidulans (strain FGSC A4 / ATCC 38163 / CBS 112.46 / NRRL 194 / M139) (Aspergillus nidulans).